The chain runs to 164 residues: Ribosome-binding factor A (164 aa).

Belongs to the RbfA family. Monomer. Binds 30S ribosomal subunits, but not 50S ribosomal subunits or 70S ribosomes.

The protein localises to the cytoplasm. One of several proteins that assist in the late maturation steps of the functional core of the 30S ribosomal subunit. Associates with free 30S ribosomal subunits (but not with 30S subunits that are part of 70S ribosomes or polysomes). Required for efficient processing of 16S rRNA. May interact with the 5'-terminal helix region of 16S rRNA. The protein is Ribosome-binding factor A of Mycobacterium leprae (strain Br4923).